Consider the following 180-residue polypeptide: Aspartate 1-decarboxylase (180 aa).

Serine 24 functions as the Schiff-base intermediate with substrate; via pyruvic acid in the catalytic mechanism. Pyruvic acid (Ser) is present on serine 24. Threonine 56 contributes to the substrate binding site. Catalysis depends on tyrosine 57, which acts as the Proton donor. A substrate-binding site is contributed by 72–74; the sequence is GAA.

Belongs to the PanD family. As to quaternary structure, heterooctamer of four alpha and four beta subunits. It depends on pyruvate as a cofactor. Is synthesized initially as an inactive proenzyme, which is activated by self-cleavage at a specific serine bond to produce a beta-subunit with a hydroxyl group at its C-terminus and an alpha-subunit with a pyruvoyl group at its N-terminus.

It is found in the cytoplasm. It carries out the reaction L-aspartate + H(+) = beta-alanine + CO2. It functions in the pathway cofactor biosynthesis; (R)-pantothenate biosynthesis; beta-alanine from L-aspartate: step 1/1. In terms of biological role, catalyzes the pyruvoyl-dependent decarboxylation of aspartate to produce beta-alanine. The protein is Aspartate 1-decarboxylase of Paramagnetospirillum magneticum (strain ATCC 700264 / AMB-1) (Magnetospirillum magneticum).